We begin with the raw amino-acid sequence, 250 residues long: Triosephosphate isomerase (250 aa).

Position 9-11 (9-11 (NWK)) interacts with substrate. Residue H94 is the Electrophile of the active site. E166 functions as the Proton acceptor in the catalytic mechanism. Substrate contacts are provided by residues G172, S211, and 232–233 (GG).

It belongs to the triosephosphate isomerase family. Homodimer.

The protein localises to the cytoplasm. It carries out the reaction D-glyceraldehyde 3-phosphate = dihydroxyacetone phosphate. It participates in carbohydrate biosynthesis; gluconeogenesis. Its pathway is carbohydrate degradation; glycolysis; D-glyceraldehyde 3-phosphate from glycerone phosphate: step 1/1. Its function is as follows. Involved in the gluconeogenesis. Catalyzes stereospecifically the conversion of dihydroxyacetone phosphate (DHAP) to D-glyceraldehyde-3-phosphate (G3P). The polypeptide is Triosephosphate isomerase (Methylococcus capsulatus (strain ATCC 33009 / NCIMB 11132 / Bath)).